Consider the following 45-residue polypeptide: NLR family pyrin domain-containing protein 2B (45 aa).

As to expression, expressed in all tissues tested, including spleen, lymph node, thymus, tonsil, peripheral blood leukocyte, bone marrow, liver, heart, brain, placenta, lung, skeletal muscle, kidney and pancreas.

It is found in the cytoplasm. It localises to the nucleus. May function as a negative regulator of NF-kappa-B by preventing RELA/p65 phosphorylation at 'Ser-536', thereby inhibiting its transcriptional activity. Through NF-kappa-B regulation may control cytokine release upon Toll-like receptors activation and therefore play a role in modulation of innate immunity. May also play a role in cell cycle progression and apoptotic process. This Homo sapiens (Human) protein is NLR family pyrin domain-containing protein 2B.